A 298-amino-acid chain; its full sequence is tRNA pseudouridine synthase-like 1 (298 aa).

The active-site Nucleophile is the Asp-60. Substrate is bound at residue Tyr-124.

Belongs to the tRNA pseudouridine synthase TruA family.

It carries out the reaction a uridine in tRNA = a pseudouridine in tRNA. This Xenopus laevis (African clawed frog) protein is tRNA pseudouridine synthase-like 1 (pusl1).